We begin with the raw amino-acid sequence, 426 residues long: Enolase (426 aa).

Gln-163 serves as a coordination point for (2R)-2-phosphoglycerate. Residue Glu-205 is the Proton donor of the active site. Residues Asp-242, Glu-285, and Asp-312 each coordinate Mg(2+). (2R)-2-phosphoglycerate contacts are provided by Lys-337, Arg-366, Ser-367, and Lys-388. Lys-337 (proton acceptor) is an active-site residue.

This sequence belongs to the enolase family. It depends on Mg(2+) as a cofactor.

It localises to the cytoplasm. Its subcellular location is the secreted. The protein localises to the cell surface. It catalyses the reaction (2R)-2-phosphoglycerate = phosphoenolpyruvate + H2O. Its pathway is carbohydrate degradation; glycolysis; pyruvate from D-glyceraldehyde 3-phosphate: step 4/5. Functionally, catalyzes the reversible conversion of 2-phosphoglycerate (2-PG) into phosphoenolpyruvate (PEP). It is essential for the degradation of carbohydrates via glycolysis. This is Enolase from Gluconacetobacter diazotrophicus (strain ATCC 49037 / DSM 5601 / CCUG 37298 / CIP 103539 / LMG 7603 / PAl5).